The following is a 335-amino-acid chain: Glyceraldehyde-3-phosphate dehydrogenase, cytosolic (335 aa).

NAD(+)-binding positions include 13–14 (RI), Asp-35, and Arg-80. D-glyceraldehyde 3-phosphate is bound by residues 151–153 (SCT), Thr-182, 211–212 (TG), and Arg-234. The active-site Nucleophile is the Cys-152. Position 316 (Asn-316) interacts with NAD(+).

This sequence belongs to the glyceraldehyde-3-phosphate dehydrogenase family. As to quaternary structure, homotetramer.

Its subcellular location is the cytoplasm. It carries out the reaction D-glyceraldehyde 3-phosphate + phosphate + NAD(+) = (2R)-3-phospho-glyceroyl phosphate + NADH + H(+). Its pathway is carbohydrate degradation; glycolysis; pyruvate from D-glyceraldehyde 3-phosphate: step 1/5. In Gracilaria gracilis (Red alga), this protein is Glyceraldehyde-3-phosphate dehydrogenase, cytosolic (GAPC).